The primary structure comprises 512 residues: FAD-linked oxidoreductase iacH (512 aa).

A signal peptide spans 1–22; sequence MVSLKACVVAYGFTLLPALVSG. 8 N-linked (GlcNAc...) asparagine glycosylation sites follow: Asn-39, Asn-55, Asn-69, Asn-210, Asn-217, Asn-278, Asn-295, and Asn-367. The FAD-binding PCMH-type domain occupies 77-248; the sequence is LDTPDVQLVV…TSLEKKIYPG (172 aa).

This sequence belongs to the oxygen-dependent FAD-linked oxidoreductase family. FAD serves as cofactor.

Its pathway is secondary metabolite biosynthesis. FAD-linked oxidoreductase; part of the gene cluster that mediates the biosynthesis of iso-A82775C, a enylepoxycyclohexane and biosynthetic precursor of the chloropestolide anticancer natural products. Within the cluster, the prenyltransferase iacE prenylates siccayne to generate pestalodiol E, using dimethylallyl diphosphate (DMAPP) as cosubstrate. The probable oxidoreductase iacF is then involved in the epoxidation of pestalodiol F to pestalodiol F, which is further converted to pestalofone A by the short-chain dehydrogenase/reductase iacG. Iso-A82775C is subsequently generated from pestalofone A by the short-chain dehydrogenase/reductase iacC. Iso-A82775C is further condensed with maldoxin via a Diels-Alder reaction to produce the anticancer natural products chloropestolides A to E. This chain is FAD-linked oxidoreductase iacH, found in Pestalotiopsis fici (strain W106-1 / CGMCC3.15140).